Reading from the N-terminus, the 410-residue chain is Gamma-glutamyl phosphate reductase (410 aa).

It belongs to the gamma-glutamyl phosphate reductase family.

The protein localises to the cytoplasm. It carries out the reaction L-glutamate 5-semialdehyde + phosphate + NADP(+) = L-glutamyl 5-phosphate + NADPH + H(+). It functions in the pathway amino-acid biosynthesis; L-proline biosynthesis; L-glutamate 5-semialdehyde from L-glutamate: step 2/2. Functionally, catalyzes the NADPH-dependent reduction of L-glutamate 5-phosphate into L-glutamate 5-semialdehyde and phosphate. The product spontaneously undergoes cyclization to form 1-pyrroline-5-carboxylate. This chain is Gamma-glutamyl phosphate reductase, found in Campylobacter jejuni subsp. jejuni serotype O:2 (strain ATCC 700819 / NCTC 11168).